A 118-amino-acid polypeptide reads, in one-letter code: Beta-defensin 126 (118 aa).

The first 20 residues, 1-20, serve as a signal peptide directing secretion; that stretch reads MKSLLFTLAVFMLLAQLVSG. Residues 21-63 are in vitro binds to LPS, mediates antimicrobial activity and inhibits LPS-mediated inflammation; that stretch reads SWYVKKCLNDVGICKKKCKPEELHVKNGWAMCGKQRDCCVPAD. Cystine bridges form between C27-C58, C34-C52, and C38-C59.

The protein belongs to the beta-defensin family. As to quaternary structure, homodimer or homooligomer; disulfide-linked. In terms of processing, O-glycosylated; glycans contain alpha(2,3)-linked sialic acids.

It localises to the secreted. Its function is as follows. Highly glycosylated atypical beta-defensin involved in several aspects of sperm function. Facilitates sperm transport in the female reproductive tract and contributes to sperm protection against immunodetection; both functions are probably implicating the negative surface charge provided by its O-linked oligosaccharides in the sperm glycocalyx. Involved in binding of sperm to oviductal epithelial cells to form a sperm reservoir until ovulation. Release from the sperm surface during capacitation and ovaluation by an elevation of oviductal fluid pH is unmasking other surface components and allows sperm to penetrate the cumulus matrix and bind to the zona pellucida of the oocyte. In vitro has antimicrobial activity and may inhibit LPS-mediated inflammation. The polypeptide is Beta-defensin 126 (DEFB126) (Pongo pygmaeus (Bornean orangutan)).